The chain runs to 962 residues: MREESWEDHDTIQLTAQRKYLAEVQALETLLTRELSAFLTEPGSKKTNIINRITGKTYALPSTELLRLYEHLEQCRKQGALMYFLERQGTYSGLMLDYDLKLNTNAVPPLEPPALSRLCHRIFVHIKNSSVLPEGSHKIHFFFTLKPEVVQGKYGFHVLIPGLKLAASTKKSIIGSLQHDATVQKILHEQGVANPESCLDPHSASVPSLLYGSSKLNHKPYQLKTGFELVFDSSDPDYIPIHQIKNIESYNLVSELSLTNEQGSLVRPVYCAADIAAEKEEEIPTDDHSLSILMLHDPEARYLHKILNLLPPEYYVEYPLWSNVVFALANTSANYRPLAEWFSQKCPEKWNTGGKEKLEKLWNDASRHTEKKITKRSIMYWAHKHAPQQYKEIVEQGYFSILAEYVYSYNGMLEHYMIAKVIYAMMGNKFVVDVDSNGKYVWFEFVLPGQPMNQGEIWKWRKEVNPDELHIYISENFSRVMDRITEHIKYHLSQPHETNILNYYKKLLKAFERSKSKIFNDSFKKGVIRQAEFLFRQRSFIQTLDTNPHLLGVGNGVLSIETIPAKLINHFHEHPIHQYTHICYVPFNPENPWTKLLLNALQDIIPELDARLWIMFYLSTAIFRGLKEALMLLWLGGGCNGKTFLMRLVAMVLGDHYASKLNISLLTSCRETAEKPNSAFMRLKGRGYGYFEETNKSEVLNTSRLKEMVNPGDVTARELNQKQESFQMTATMVAASNYNFIIDTTDHGTWRRLRHYRSKVKFCHNPDPGNPYEKKEDPRFIHEYIMDPDCQNAFFSILVYFWEKLQKEYNGQIKKVFCPTIESETEAYRKSQDTLHRFITERVVESPSAETVYNLSEVVTAYAEWYNANINVKRHIALELSQELENSVLEKYLQWSPNKTRILKGCRILHKFETLQPGESYIGVSTAGTLLNTPICEPKNKWWEWSPNLSAPPEKEASAPTP.

The SF3 helicase domain occupies 607-775; it reads ELDARLWIMF…PDPGNPYEKK (169 aa). Position 636–643 (636–643) interacts with ATP; that stretch reads GGGCNGKT.

Belongs to the asfivirus helicase C962R family.

This chain is Putative primase C962R, found in African swine fever virus (strain Badajoz 1971 Vero-adapted) (Ba71V).